A 757-amino-acid polypeptide reads, in one-letter code: Zinc finger CCCH domain-containing protein 5 (757 aa).

Positions 1 to 127 are disordered; it reads MEQANEKEEE…REEEERRWKD (127 aa). Residues 13-35 are compositionally biased toward basic and acidic residues; the sequence is HEEAAGEKESFEESKEKAAEMSR. Residues 36–50 are compositionally biased toward basic residues; it reads KEKRKAMKKLKRKQV. A compositionally biased stretch (basic and acidic residues) spans 51-127; it reads RKEIAAKERE…REEEERRWKD (77 aa). A C3H1-type 1 zinc finger spans residues 240–268; that stretch reads EQDKAHCPFHLKTGACRFGQRCSRVHFYP. Positions 295-372 constitute an RRM domain; sequence YTDEEAELCY…KQVNCEFVNI (78 aa). The segment at 374-404 adopts a C3H1-type 2 zinc-finger fold; the sequence is RWKVAICGEYMKSRLKTCSRGSACNFIHCFR. The tract at residues 441 to 757 is disordered; that stretch reads HESSGSLNDS…EEEIERWRPV (317 aa). Positions 444 to 455 are enriched in polar residues; it reads SGSLNDSISDLS. Positions 487–546 are enriched in basic and acidic residues; the sequence is YHGDTQDSTREDKLRRHAENCHDGDDSPSRDGSLEREMYKERRYAKDTLHRDSRWSEHSP. 2 stretches are compositionally biased toward basic residues: residues 547–557 and 600–609; these read GHRVGRKRIHG and KTHRSSRKHS. Composition is skewed to basic and acidic residues over residues 610–634, 644–672, and 681–721; these read REGSSADKEEGHEHDRVHTVSDKSH, RSSSRYSHEEDSTESRHHQHKESDKKRSV, and SDKD…ETHK. A compositionally biased stretch (basic residues) spans 722–733; that stretch reads ERRHRHRKRRRT.

This is Zinc finger CCCH domain-containing protein 5 from Arabidopsis thaliana (Mouse-ear cress).